A 157-amino-acid polypeptide reads, in one-letter code: SsrA-binding protein (157 aa).

Belongs to the SmpB family.

The protein localises to the cytoplasm. Its function is as follows. Required for rescue of stalled ribosomes mediated by trans-translation. Binds to transfer-messenger RNA (tmRNA), required for stable association of tmRNA with ribosomes. tmRNA and SmpB together mimic tRNA shape, replacing the anticodon stem-loop with SmpB. tmRNA is encoded by the ssrA gene; the 2 termini fold to resemble tRNA(Ala) and it encodes a 'tag peptide', a short internal open reading frame. During trans-translation Ala-aminoacylated tmRNA acts like a tRNA, entering the A-site of stalled ribosomes, displacing the stalled mRNA. The ribosome then switches to translate the ORF on the tmRNA; the nascent peptide is terminated with the 'tag peptide' encoded by the tmRNA and targeted for degradation. The ribosome is freed to recommence translation, which seems to be the essential function of trans-translation. The chain is SsrA-binding protein from Elusimicrobium minutum (strain Pei191).